A 593-amino-acid chain; its full sequence is Insulin-like growth factor 2 mRNA-binding protein 3-B (593 aa).

RRM domains follow at residues 2 to 75 (NKLY…HSVP) and 81 to 156 (RKLQ…YIPD). Positions 159–208 (ATPQSPSQQLQQPQQQHPQGRRGFGQRGPARQGSPGAAARPKPQSEVPLR) are disordered. Residues 161–176 (PQSPSQQLQQPQQQHP) are compositionally biased toward low complexity. KH domains follow at residues 204–269 (EVPL…CKII) and 285–352 (EIPL…EEEV). Low complexity predominate over residues 390–402 (SGMPPPSAGVSSP). A disordered region spans residues 390–412 (SGMPPPSAGVSSPTTSASYPPFG). KH domains are found at residues 417-482 (SETV…QGRI) and 499-565 (KLEA…QRKI). The interval 571–593 (QVRRQQQQQQKTAQSGQPQPRRK) is disordered.

Belongs to the RRM IMP/VICKZ family. Homodimer and multimer. Associates with microtubules. Interaction with a translocation machinery protein TRAPA of the endoplasmic reticulum. Component of a mRNP complex, at least composed of DAZAP1, IGF2BP3, STAU and VgRBP60. The mRNP complex with DAZAP1, IGF2BP3, STAU and VgRBP60 is only found in the cytoplasm. Interacts with a hnRNP 1 related RNA transport protein VgRBP60 both in the nucleus (in an RNA-independent manner) and the cytoplasm (in an RNA-dependent manner). Found in a B3 activator complex. In terms of tissue distribution, expressed in oocytes, kidney and pancreas (at protein level). Expressed in oocytes, kidney and pancreas.

It is found in the nucleus. The protein localises to the cytoplasm. The protein resides in the endoplasmic reticulum. In terms of biological role, RNA-binding protein that acts as a regulator of mRNA transport and localization. Binds to the RNA sequence motif 5'-UUCAC-3'. Preferentially binds to N6-methyladenosine (m6A)-containing mRNAs and increases their stability. Mediates the specific association of Vg1 RNA to microtubules. May regulate mRNA translation. Binds specifically to the vegetal localization elements (VLE or VgLE) in the 3'-UTR of Vg1 and VegT mRNAs. Binds to the Vg1 and VegT mRNAs in both the nucleus and the cytoplasm. May regulate mRNA translation. Acts as a transcription regulator. Binds to the 5'-[TA]GGTTACT-3' motif within element 3 of the TFIIIA gene promoter. In Xenopus laevis (African clawed frog), this protein is Insulin-like growth factor 2 mRNA-binding protein 3-B (igf2bp3-b).